A 335-amino-acid chain; its full sequence is Holliday junction branch migration complex subunit RuvB (335 aa).

A large ATPase domain (RuvB-L) region spans residues 4–184 (ADRIISGQAK…FGIVQRLEFY (181 aa)). Residues isoleucine 23, arginine 24, glycine 65, lysine 68, threonine 69, threonine 70, 131–133 (EDY), arginine 174, tyrosine 184, and arginine 221 contribute to the ATP site. Threonine 69 is a binding site for Mg(2+). Residues 185-255 (SVEDLTSIVA…VAKQALSMLD (71 aa)) are small ATPAse domain (RuvB-S). A head domain (RuvB-H) region spans residues 258–335 (DAGFDYLDRK…RHFGLQKLSD (78 aa)). Positions 294, 313, and 318 each coordinate DNA.

Belongs to the RuvB family. In terms of assembly, homohexamer. Forms an RuvA(8)-RuvB(12)-Holliday junction (HJ) complex. HJ DNA is sandwiched between 2 RuvA tetramers; dsDNA enters through RuvA and exits via RuvB. An RuvB hexamer assembles on each DNA strand where it exits the tetramer. Each RuvB hexamer is contacted by two RuvA subunits (via domain III) on 2 adjacent RuvB subunits; this complex drives branch migration. In the full resolvosome a probable DNA-RuvA(4)-RuvB(12)-RuvC(2) complex forms which resolves the HJ.

It is found in the cytoplasm. It carries out the reaction ATP + H2O = ADP + phosphate + H(+). Its function is as follows. The RuvA-RuvB-RuvC complex processes Holliday junction (HJ) DNA during genetic recombination and DNA repair, while the RuvA-RuvB complex plays an important role in the rescue of blocked DNA replication forks via replication fork reversal (RFR). RuvA specifically binds to HJ cruciform DNA, conferring on it an open structure. The RuvB hexamer acts as an ATP-dependent pump, pulling dsDNA into and through the RuvAB complex. RuvB forms 2 homohexamers on either side of HJ DNA bound by 1 or 2 RuvA tetramers; 4 subunits per hexamer contact DNA at a time. Coordinated motions by a converter formed by DNA-disengaged RuvB subunits stimulates ATP hydrolysis and nucleotide exchange. Immobilization of the converter enables RuvB to convert the ATP-contained energy into a lever motion, pulling 2 nucleotides of DNA out of the RuvA tetramer per ATP hydrolyzed, thus driving DNA branch migration. The RuvB motors rotate together with the DNA substrate, which together with the progressing nucleotide cycle form the mechanistic basis for DNA recombination by continuous HJ branch migration. Branch migration allows RuvC to scan DNA until it finds its consensus sequence, where it cleaves and resolves cruciform DNA. This chain is Holliday junction branch migration complex subunit RuvB, found in Haemophilus influenzae (strain PittEE).